Consider the following 402-residue polypeptide: Zinc finger CCHC domain-containing protein 12 (402 aa).

The segment at 308–341 (IDSPHNSRAQFPSTSGGSGYKNNGPGEMRRARKR) is disordered. Residues 311 to 322 (PHNSRAQFPSTS) show a composition bias toward polar residues. The segment at 345-362 (IRCSYCGEEGHSKETCDN) adopts a CCHC-type zinc-finger fold.

The protein belongs to the ZCCHC12 family. Interacts with SMAD1 and CREB-binding protein (CBP). Forms a protein-DNA complex through its association with SMAD1.

In terms of biological role, transcriptional coactivator in the bone morphogenetic protein (BMP)-signaling pathway. It positively modulates BMP signaling by interacting with SMAD1 and associating with CBP in the transcription complex. It contributes to the BMP-induced enhancement of cholinergic-neuron-specific gene expression. The protein is Zinc finger CCHC domain-containing protein 12 (ZCCHC12) of Homo sapiens (Human).